The sequence spans 161 residues: DNA-directed RNA polymerase 18 kDa subunit (161 aa).

This sequence belongs to the poxviridae DNA-directed RNA polymerase 18 kDa subunit family. The DNA-dependent RNA polymerase used for intermediate and late genes expression consists of eight subunits Rpo30/OPG66, Rpo7/OPG90, Rpo22/OPG103, Rpo147/OPG105, Rpo18/OPG119, Rpo19/OPG131, Rpo132/OPG151 and Rpo35/OPG156. The same holoenzyme, with the addition of the transcription-specificity factor OPG109, is used for early gene expression.

It localises to the virion. The catalysed reaction is RNA(n) + a ribonucleoside 5'-triphosphate = RNA(n+1) + diphosphate. Part of the DNA-dependent RNA polymerase which catalyzes the transcription of viral DNA into RNA using the four ribonucleoside triphosphates as substrates. Responsible for the transcription of early, intermediate and late genes. DNA-dependent RNA polymerase associates with the early transcription factor (ETF), itself composed of OPG118 and OPG133, thereby allowing the early genes transcription. Late transcription, and probably also intermediate transcription, require newly synthesized RNA polymerase. The polypeptide is DNA-directed RNA polymerase 18 kDa subunit (OPG119) (Homo sapiens (Human)).